The following is a 276-amino-acid chain: Homeobox-leucine zipper protein HOX22 (276 aa).

Positions Ala70–Gln130 form a DNA-binding region, homeobox. Residues Lys129–Arg173 form a leucine-zipper region. The segment at Leu170–Gly212 is disordered. Residues Ala182–Ser197 are compositionally biased toward low complexity.

The protein belongs to the HD-ZIP homeobox family. Class I subfamily. As to expression, expressed in seedlings, roots, stems, leaf sheaths and blades and panicles.

The protein localises to the nucleus. Probable transcription factor. In Oryza sativa subsp. japonica (Rice), this protein is Homeobox-leucine zipper protein HOX22 (HOX22).